The following is a 513-amino-acid chain: ATP synthase subunit alpha (513 aa).

Position 169 to 176 (169 to 176 (GDRQTGKT)) interacts with ATP.

It belongs to the ATPase alpha/beta chains family. In terms of assembly, F-type ATPases have 2 components, CF(1) - the catalytic core - and CF(0) - the membrane proton channel. CF(1) has five subunits: alpha(3), beta(3), gamma(1), delta(1), epsilon(1). CF(0) has three main subunits: a(1), b(2) and c(9-12). The alpha and beta chains form an alternating ring which encloses part of the gamma chain. CF(1) is attached to CF(0) by a central stalk formed by the gamma and epsilon chains, while a peripheral stalk is formed by the delta and b chains.

The protein resides in the cell inner membrane. It catalyses the reaction ATP + H2O + 4 H(+)(in) = ADP + phosphate + 5 H(+)(out). Functionally, produces ATP from ADP in the presence of a proton gradient across the membrane. The alpha chain is a regulatory subunit. In Yersinia enterocolitica serotype O:8 / biotype 1B (strain NCTC 13174 / 8081), this protein is ATP synthase subunit alpha.